Consider the following 133-residue polypeptide: Large ribosomal subunit protein bL19 (133 aa).

This sequence belongs to the bacterial ribosomal protein bL19 family.

This protein is located at the 30S-50S ribosomal subunit interface and may play a role in the structure and function of the aminoacyl-tRNA binding site. This chain is Large ribosomal subunit protein bL19, found in Stenotrophomonas maltophilia (strain K279a).